The following is a 95-amino-acid chain: Protein RnfH (95 aa).

Belongs to the UPF0125 (RnfH) family.

The polypeptide is Protein RnfH (Methylococcus capsulatus (strain ATCC 33009 / NCIMB 11132 / Bath)).